A 380-amino-acid chain; its full sequence is Cytochrome b (380 aa).

The next 4 membrane-spanning stretches (helical) occupy residues 34-54, 78-99, 114-134, and 179-199; these read FGSLLGICLMTQILTGLLLAM, WLIRNLHANGASLFFICIYLHI, WNTGVILLLTLMATAFVGYVL, and FFALHFLLPFIIAGLTLIHLT. H84 and H98 together coordinate heme b. 2 residues coordinate heme b: H183 and H197. H202 contributes to the a ubiquinone binding site. The next 4 helical transmembrane spans lie at 227-247, 289-309, 321-341, and 348-368; these read TKDILGFIILLLPLMTLAMFA, LGGVLALAASVLVLFLAPFLH, LSQLLFWTLVANLFILTWIGS, and FIITGQLASLTYFTILLILFP.

It belongs to the cytochrome b family. In terms of assembly, the cytochrome bc1 complex contains 11 subunits: 3 respiratory subunits (MT-CYB, CYC1 and UQCRFS1), 2 core proteins (UQCRC1 and UQCRC2) and 6 low-molecular weight proteins (UQCRH/QCR6, UQCRB/QCR7, UQCRQ/QCR8, UQCR10/QCR9, UQCR11/QCR10 and a cleavage product of UQCRFS1). This cytochrome bc1 complex then forms a dimer. Heme b is required as a cofactor.

The protein localises to the mitochondrion inner membrane. Its function is as follows. Component of the ubiquinol-cytochrome c reductase complex (complex III or cytochrome b-c1 complex) that is part of the mitochondrial respiratory chain. The b-c1 complex mediates electron transfer from ubiquinol to cytochrome c. Contributes to the generation of a proton gradient across the mitochondrial membrane that is then used for ATP synthesis. This Aphanotriccus audax (Black-billed flycatcher) protein is Cytochrome b (MT-CYB).